The sequence spans 264 residues: Thymidylate synthase (264 aa).

Arg21 is a binding site for dUMP. Residue His51 coordinates (6R)-5,10-methylene-5,6,7,8-tetrahydrofolate. 126-127 contributes to the dUMP binding site; sequence RR. Cys146 serves as the catalytic Nucleophile. DUMP contacts are provided by residues 166 to 169, Asn177, and 207 to 209; these read RSVD and HLY. Asp169 lines the (6R)-5,10-methylene-5,6,7,8-tetrahydrofolate pocket. (6R)-5,10-methylene-5,6,7,8-tetrahydrofolate is bound at residue Ala263.

Belongs to the thymidylate synthase family. Bacterial-type ThyA subfamily. In terms of assembly, homodimer.

It is found in the cytoplasm. The catalysed reaction is dUMP + (6R)-5,10-methylene-5,6,7,8-tetrahydrofolate = 7,8-dihydrofolate + dTMP. Its pathway is pyrimidine metabolism; dTTP biosynthesis. Functionally, catalyzes the reductive methylation of 2'-deoxyuridine-5'-monophosphate (dUMP) to 2'-deoxythymidine-5'-monophosphate (dTMP) while utilizing 5,10-methylenetetrahydrofolate (mTHF) as the methyl donor and reductant in the reaction, yielding dihydrofolate (DHF) as a by-product. This enzymatic reaction provides an intracellular de novo source of dTMP, an essential precursor for DNA biosynthesis. This chain is Thymidylate synthase, found in Geobacillus sp. (strain WCH70).